The primary structure comprises 394 residues: L-lactate 2-monooxygenase (394 aa).

Positions 19-394 (VAPTLPMSYA…LTIDALRPTR (376 aa)) constitute an FMN hydroxy acid dehydrogenase domain. Residue tyrosine 45 participates in a 2-oxocarboxylate binding. Residues 98–100 (PIG), serine 129, and glutamine 151 each bind FMN. Residue tyrosine 153 participates in a 2-oxocarboxylate binding. Threonine 179 contacts FMN. Arginine 188 contributes to the a 2-oxocarboxylate binding site. Lysine 267 contacts FMN. Histidine 291 acts as the Proton acceptor in catalysis. Arginine 294 is a binding site for a 2-oxocarboxylate. FMN contacts are provided by residues 321 to 325 (DSGIR) and arginine 345.

The protein belongs to the FMN-dependent alpha-hydroxy acid dehydrogenase family. As to quaternary structure, homotetramer. It depends on FMN as a cofactor.

The catalysed reaction is (S)-lactate + O2 = acetate + CO2 + H2O. In terms of biological role, catalyzes the oxidative decarboxylation of (S)-lactate (L-lactate) to acetate and carbon dioxide. Its physiological role remains unknown. This Mycolicibacterium smegmatis (Mycobacterium smegmatis) protein is L-lactate 2-monooxygenase.